A 1028-amino-acid polypeptide reads, in one-letter code: Collagen alpha-1(VI) chain (1028 aa).

The first 19 residues, 1 to 19 (MRAARALLPLLLQACWTAA), serve as a signal peptide directing secretion. The tract at residues 20-256 (QDEPETPRAV…CCSFECQPAR (237 aa)) is N-terminal globular domain. One can recognise a VWFA 1 domain in the interval 37–235 (DLFFVLDTSE…EAISQTIDTI (199 aa)). N-linked (GlcNAc...) asparagine glycosylation occurs at asparagine 212. The tract at residues 254–590 (PARGPPGLRG…GPPGHQGPPG (337 aa)) is disordered. The interval 257-592 (GPPGLRGDPG…PGHQGPPGPD (336 aa)) is triple-helical region. The Cell attachment site signature appears at 262–264 (RGD). 2 stretches are compositionally biased toward basic and acidic residues: residues 268-285 (EGERGKPGLPGEKGEAGD) and 301-334 (KGEKGSRGEKGSRGPKGYKGEKGKRGIDGVDGVK). A compositionally biased stretch (low complexity) spans 384–394 (RPGSSGPSGDE). The Cell attachment site signature appears at 442–444 (RGD). A compositionally biased stretch (low complexity) spans 457-471 (EGPVGVPGDPGEAGP). The Cell attachment site signature appears at 478-480 (RGD). The span at 483–493 (PPGSEGARGAP) shows a compositional bias: low complexity. N-linked (GlcNAc...) asparagine glycans are attached at residues asparagine 516 and asparagine 537. The segment covering 550-560 (GEAGDPGDDNN) has biased composition (acidic residues). A compositionally biased stretch (pro residues) spans 579–590 (PQGPPGHQGPPG). The segment at 593-1028 (ECEILDIIMK…QTVSRKVALG (436 aa)) is C-terminal globular domain. VWFA domains follow at residues 615 to 805 (DLLF…LKNV) and 829 to 1021 (DITI…HQTV). N-linked (GlcNAc...) asparagine glycosylation is found at asparagine 804 and asparagine 896.

The protein belongs to the type VI collagen family. As to quaternary structure, trimers composed of three different chains: alpha-1(VI), alpha-2(VI), and alpha-3(VI) or alpha-5(VI) or alpha-6(VI). Post-translationally, prolines at the third position of the tripeptide repeating unit (G-X-Y) are hydroxylated in some or all of the chains.

The protein resides in the secreted. The protein localises to the extracellular space. It localises to the extracellular matrix. Collagen VI acts as a cell-binding protein. This Homo sapiens (Human) protein is Collagen alpha-1(VI) chain (COL6A1).